A 581-amino-acid chain; its full sequence is Bestrophin-1 (581 aa).

Topologically, residues 1-31 (MTVTYSSQVANARLGSFSRLLLCWRGSIYKL) are cytoplasmic. A10 is a Ca(2+) binding site. Residues 32-51 (LYGEFLIFLLCYYIIRFIYR) form a helical membrane-spanning segment. Topologically, residues 52–60 (MALTDEQQV) are extracellular. The helical transmembrane segment at 61-82 (IFEKLTLYCDSYIQLIPISFVL) threads the bilayer. Topologically, residues 83–237 (GFYVTLVVTR…DWISVPLVYT (155 aa)) are cytoplasmic. A helical membrane pass occupies residues 238–255 (QVVTVAVYSFFLACLVGR). Topologically, residues 256-274 (QFLNPAKAYPGHEMDLVVP) are extracellular. Residues 275 to 288 (LFTFLQFFFYAGWL) traverse the membrane as a helical segment. Residues 289-581 (KVAEQLINPF…ALENRDEAHS (293 aa)) are Cytoplasmic-facing. Residues Q293, N296, D301, and D304 each contribute to the Ca(2+) site. The interval 416–440 (EGHFHEGHPKNLRGARLDSSDQEDS) is disordered.

The protein belongs to the anion channel-forming bestrophin (TC 1.A.46) family. Calcium-sensitive chloride channel subfamily. In terms of assembly, interacts with YWHAG; this interaction promotes the ligand-gated L-glutamate channel activity leading to the positive regulation of NMDA glutamate receptor activity through the L-glutamate secretion. In terms of processing, phosphorylated (in vitro). Dephosphorylated (in vitro) by PP2A.

Its subcellular location is the cell membrane. The protein resides in the basolateral cell membrane. It catalyses the reaction chloride(in) = chloride(out). It carries out the reaction hydrogencarbonate(in) = hydrogencarbonate(out). The catalysed reaction is 4-aminobutanoate(in) = 4-aminobutanoate(out). The enzyme catalyses L-glutamate(out) = L-glutamate(in). Ligand-gated anion channel that allows the movement of anions across cell membranes when activated by calcium (Ca2+). Allows the movement of chloride and hydrogencarbonate. Found in a partially open conformation leading to significantly smaller chloride movement. Upon F2R/PAR-1 activation, the sequestered calcium is released into the cytosol of astrocytes, leading to the (Ca2+)-dependent release of L-glutamate into the synaptic cleft that targets the neuronal postsynaptic GRIN2A/NMDAR receptor resulting in the synaptic plasticity regulation. Upon activation of the norepinephrine-alpha-1 adrenergic receptor signaling pathway, transports as well D-serine than L-glutamate in a (Ca2+)-dependent manner, leading to activation of adjacent NMDAR receptors and therefore regulates the heterosynaptic long-term depression and metaplasticity during initial memory acquisition. Releases the 4-aminobutanoate neurotransmitter in a (Ca2+)-dependent manner, and participates in its tonic release from cerebellar glial cells. The chain is Bestrophin-1 from Sus scrofa (Pig).